A 577-amino-acid chain; its full sequence is Outer spore wall assembly protein SHE10 (577 aa).

The N-terminal stretch at 1-23 is a signal peptide; it reads MGKLIKLITTLTVLVSLLQYCCE. Coiled coils occupy residues 379–416 and 513–561; these read NETRSTLDELTNAMEKDLSEITDEIEKKVNAIREENVE and ILRS…EEDV. The segment covering 525–545 has biased composition (basic and acidic residues); it reads RERKERERKEREKAAAEEFQR. The interval 525-577 is disordered; that stretch reads RERKERERKEREKAAAEEFQRQQELLRQQEEEDEEDVSYTSTSTITTTTTMTL. Over residues 562–577 the composition is skewed to low complexity; it reads SYTSTSTITTTTTMTL.

It belongs to the SHE10 family. As to quaternary structure, component of the mitochondria-localized RNase mitochondrial RNA-processing (RNase MRP) composed of one single RNA encoded by the NME1 gene and at least 31 proteins. Absent in the nucleus-localized RNase MRP (NuMRP).

The protein localises to the mitochondrion. Functionally, involved in spore wall assembly. May be a component of the mitochondrial RNase MRP (MtMRP), a ribonucleoprotein endoribonuclease involved in the cleaving RNA transcripts to generate primers for DNA replication in mitochondria. The protein is Outer spore wall assembly protein SHE10 of Saccharomyces cerevisiae (strain YJM789) (Baker's yeast).